The primary structure comprises 404 residues: Sulfate adenylyltransferase (404 aa).

It belongs to the sulfate adenylyltransferase family.

The catalysed reaction is sulfate + ATP + H(+) = adenosine 5'-phosphosulfate + diphosphate. Its pathway is sulfur metabolism; hydrogen sulfide biosynthesis; sulfite from sulfate: step 1/3. This chain is Sulfate adenylyltransferase, found in Chlorobium chlorochromatii (strain CaD3).